A 362-amino-acid polypeptide reads, in one-letter code: NAD(P)H-quinone oxidoreductase subunit 1, chloroplastic (362 aa).

The next 8 membrane-spanning stretches (helical) occupy residues 31–51 (WVPLPILSLVIVATLGVLVIV), 99–119 (WLFTLGPAVVVIPIFLAYLVV), 132–152 (IGIFFWIAISSIAPIGLLMSG), 178–198 (LAICVLSVCLLADSLSTVDIV), 206–226 (ILTWNIWRQPIGFVAFLIAAL), 268–288 (LVSGCFVTVLYLGGWHGPFAI), 303–323 (AFLGITWTLLKTFLFLFAAIL), and 336–356 (LLDLGWKFLLPVSLGNLLLTA).

This sequence belongs to the complex I subunit 1 family. NDH is composed of at least 16 different subunits, 5 of which are encoded in the nucleus.

It localises to the plastid. The protein localises to the chloroplast thylakoid membrane. It carries out the reaction a plastoquinone + NADH + (n+1) H(+)(in) = a plastoquinol + NAD(+) + n H(+)(out). It catalyses the reaction a plastoquinone + NADPH + (n+1) H(+)(in) = a plastoquinol + NADP(+) + n H(+)(out). Functionally, NDH shuttles electrons from NAD(P)H:plastoquinone, via FMN and iron-sulfur (Fe-S) centers, to quinones in the photosynthetic chain and possibly in a chloroplast respiratory chain. The immediate electron acceptor for the enzyme in this species is believed to be plastoquinone. Couples the redox reaction to proton translocation, and thus conserves the redox energy in a proton gradient. This Nephroselmis olivacea (Green alga) protein is NAD(P)H-quinone oxidoreductase subunit 1, chloroplastic.